Here is an 869-residue protein sequence, read N- to C-terminus: H(+)/Cl(-) exchange transporter 6 (869 aa).

Topologically, residues 1–80 (MAGCRGSLCC…KKGRRYEAVK (80 aa)) are cytoplasmic. Helical transmembrane passes span 81–113 (WMVV…FGVV) and 128–150 (LSLL…LVLI). The Selectivity filter part_1 signature appears at 156 to 160 (GSGIP). Position 157 (S157) interacts with chloride. The helical intramembrane region spans 159–166 (IPEVKCYL). The next 2 membrane-spanning stretches (helical) occupy residues 176 to 194 (RLRT…VAGG) and 200 to 217 (EGPM…LPQF). The Selectivity filter part_2 signature appears at 198–202 (EKEGP). 2 consecutive intramembrane regions (helical) follow at residues 241 to 253 (FVSA…VAAA) and 257 to 265 (PIGGTLFSL). A run of 3 helical transmembrane segments spans residues 277–294 (TWKV…LNFF), 335–364 (GFFV…YRMR), and 371–392 (KLVR…VFVA). N-linked (GlcNAc...) asparagine glycans are attached at residues N410, N422, and N432. 2 consecutive transmembrane segments (helical) span residues 462-481 (PVTL…WTYG) and 487-511 (GLFV…KSYI). Residues 487–491 (GLFVP) carry the Selectivity filter part_3 motif. F489 lines the chloride pocket. The segment at residues 519–533 (GTFALIGAAAFLGGV) is an intramembrane region (helical). Positions 534–536 (VRM) form an intramembrane region, note=Loop between two helices. The helical intramembrane region spans 537–548 (TISLTVILIEST). An intramembrane region (note=Loop between two helices) is located at residues 549 to 552 (NEIT). Residues 553-571 (YGLPIMVTLMVAKWTGDFF) form a helical membrane-spanning segment. Residues 572–869 (NKGIYDIHVG…ARLRQHYQTI (298 aa)) are Cytoplasmic-facing. Residue Y576 participates in chloride binding. The CBS 1 domain maps to 605 to 662 (MEPNLTYVYPHTRIQSLVSILRTTVHHAFPVVTENRGNEKEFMKGNQLISNNIKFKKS). ATP is bound at residue 630–632 (HHA). Position 773 is a phosphoserine (S773). Residues 807 to 868 (MNPSPFTVSP…QARLRQHYQT (62 aa)) enclose the CBS 2 domain. 849–852 (TRHN) contributes to the ATP binding site.

The protein belongs to the chloride channel (TC 2.A.49) family. ClC-6/CLCN6 subfamily. N-glycosylated on several asparagine residues. In terms of tissue distribution, testis, ovary, small intestine, brain and skeletal muscle. Low level expression in aortic and coronary vascular smooth muscle cells, and aortic endothelial cells. Isoform 3 is only detected in kidney.

The protein resides in the late endosome membrane. The catalysed reaction is 2 chloride(in) + H(+)(out) = 2 chloride(out) + H(+)(in). Functionally, voltage-gated channel mediating the exchange of chloride ions against protons. Functions as antiporter and contributes to the acidification of the late endosome lumen. The CLC channel family contains both chloride channels and proton-coupled anion transporters that exchange chloride or another anion for protons. The presence of conserved gating glutamate residues is typical for family members that function as antiporters. The protein is H(+)/Cl(-) exchange transporter 6 of Homo sapiens (Human).